Here is a 95-residue protein sequence, read N- to C-terminus: Large ribosomal subunit protein bL25 (95 aa).

This sequence belongs to the bacterial ribosomal protein bL25 family. Part of the 50S ribosomal subunit; part of the 5S rRNA/L5/L18/L25 subcomplex. Contacts the 5S rRNA. Binds to the 5S rRNA independently of L5 and L18.

Its function is as follows. This is one of the proteins that binds to the 5S RNA in the ribosome where it forms part of the central protuberance. In Shewanella frigidimarina (strain NCIMB 400), this protein is Large ribosomal subunit protein bL25.